The primary structure comprises 808 residues: Receptor like protein 27 (808 aa).

The first 31 residues, 1 to 31, serve as a signal peptide directing secretion; it reads MLFFIKVFMKTILSVLLLFFIFASSFTLVVG. The Extracellular segment spans residues 32-740; that stretch reads LAGCRPDQIQ…DEDEEVLNWK (709 aa). Residues N56, N68, N90, N103, N108, N144, and N167 are each glycosylated (N-linked (GlcNAc...) asparagine). 12 LRR repeats span residues 96-120, 122-144, 145-170, 172-192, 193-218, 220-241, 242-265, 266-291, 293-314, 315-338, 340-363, and 364-387; these read LQHL…GFGN, NRLE…SFSN, LSQL…NLTK, SILV…LLTL, PFLS…STSS, LEFM…ISKL, INLK…LFSS, FKSL…SKIP, NLEN…LKNL, TKLE…FWNL, RLRR…VLVN, and SSVR…PLSI. A glycan (N-linked (GlcNAc...) asparagine) is linked at N213. The N-linked (GlcNAc...) asparagine glycan is linked to N313. Residue N363 is glycosylated (N-linked (GlcNAc...) asparagine). Residues 388 to 407 form an LRR 13; degenerate repeat; that stretch reads NLLSAWNNSFTGNIPLETCN. N394, N407, and N420 each carry an N-linked (GlcNAc...) asparagine glycan. 10 LRR repeats span residues 408 to 434, 436 to 456, 457 to 481, 483 to 504, 505 to 529, 532 to 556, 601 to 625, 626 to 649, 650 to 673, and 675 to 698; these read RSSL…DFQE, LIVV…IFSD, GALL…LLNC, MLRF…WLKA, LPDL…DRGP, FPKL…YFVN, LTSY…IGLL, KALI…LANV, TELE…LKTL, and FLAY…QITG. N480 is a glycosylation site (N-linked (GlcNAc...) asparagine). The N-linked (GlcNAc...) asparagine glycan is linked to N544. 2 N-linked (GlcNAc...) asparagine glycosylation sites follow: N632 and N648. A helical transmembrane segment spans residues 741-761; it reads AVVIGYWPGLLLGLIMAHVIA. Over 762–808 the chain is Cytoplasmic; it reads SFKPKWLVKIVGPEKRKEDNPVRLFMTLDSRWDSFNNKKNVEQKSDM.

It belongs to the RLP family.

The protein localises to the cell membrane. The sequence is that of Receptor like protein 27 from Arabidopsis thaliana (Mouse-ear cress).